The following is a 202-amino-acid chain: Ras-related protein RABD2c (202 aa).

Residues 15-23 (GDSGVGKSC), 33-40 (YLDSYIST), 63-67 (DTAGQ), 121-124 (NKCD), and 151-153 (SAK) contribute to the GTP site. An Effector region motif is present at residues 37-45 (YISTIGVDF). Positions 174 to 202 (ASQPAGGSKPPTVQIRGQPVNQQSGCCSS) are disordered. Residues 192 to 202 (PVNQQSGCCSS) show a composition bias toward polar residues. S-geranylgeranyl cysteine attachment occurs at residues Cys-199 and Cys-200.

The protein belongs to the small GTPase superfamily. Rab family.

The protein localises to the cell membrane. The protein resides in the golgi apparatus. It is found in the trans-Golgi network membrane. It localises to the golgi apparatus membrane. Functionally, protein transport. Regulator of membrane traffic from the Golgi apparatus towards the endoplasmic reticulum (ER). The chain is Ras-related protein RABD2c (RABD2C) from Arabidopsis thaliana (Mouse-ear cress).